The chain runs to 511 residues: 2,3-bisphosphoglycerate-independent phosphoglycerate mutase (511 aa).

Mn(2+) is bound by residues aspartate 14 and serine 64. Serine 64 functions as the Phosphoserine intermediate in the catalytic mechanism. Substrate-binding positions include histidine 125, 155 to 156 (RD), arginine 187, arginine 193, 259 to 262 (RADR), and lysine 333. Aspartate 400, histidine 404, aspartate 441, histidine 442, and histidine 460 together coordinate Mn(2+).

Belongs to the BPG-independent phosphoglycerate mutase family. Monomer. It depends on Mn(2+) as a cofactor.

It carries out the reaction (2R)-2-phosphoglycerate = (2R)-3-phosphoglycerate. It participates in carbohydrate degradation; glycolysis; pyruvate from D-glyceraldehyde 3-phosphate: step 3/5. Its function is as follows. Catalyzes the interconversion of 2-phosphoglycerate and 3-phosphoglycerate. This chain is 2,3-bisphosphoglycerate-independent phosphoglycerate mutase, found in Pseudomonas putida (strain GB-1).